We begin with the raw amino-acid sequence, 189 residues long: Elongation factor P-like protein (189 aa).

It belongs to the elongation factor P family.

This is Elongation factor P-like protein from Vibrio atlanticus (strain LGP32) (Vibrio splendidus (strain Mel32)).